The following is a 602-amino-acid chain: RNA-binding NOB1-like protein (602 aa).

Residues Met-1–Asp-25 form a disordered region. The PINc domain occupies Val-48–Leu-134. 2 disordered regions span residues Ser-258 to Ser-278 and Ile-301 to Ile-331. The segment covering Ile-301–Glu-329 has biased composition (basic and acidic residues). Positions Ile-331–Glu-365 form a coiled coil. An NOB1 zinc finger spans residues Ile-452–Gly-522. Residues Cys-462, Cys-465, Cys-477, and Cys-480 each coordinate Zn(2+).

It belongs to the NOB1 family. In terms of assembly, component of the small ribosomal subunit, ribosomal RNA processing complex (SSU RRP complex). As to expression, highly expressed in flowers and siliques and at lower levels in roots, hypocotyls, stems, leaves and seeds.

Its subcellular location is the nucleus. It localises to the nucleoplasm. It is found in the cytoplasm. Functionally, essential protein required during embryogenesis and pollen development. Endonuclease cleaving pre-rRNA at the 3' end of the mature 18S rRNA (D-site); cleaves 20S pre-rRNA in the cytoplasm. Required for processing of 20S pre-rRNA precursor and biogenesis of 40S ribosomal subunits. This chain is RNA-binding NOB1-like protein, found in Arabidopsis thaliana (Mouse-ear cress).